The primary structure comprises 714 residues: Polyribonucleotide nucleotidyltransferase (714 aa).

Mg(2+)-binding residues include aspartate 486 and aspartate 492. The KH domain maps to 553–612 (PRIITMKINPEKIRDVIGKGGAVIRALTEETGTTIDIEEDGTIKIGCTSAEAGEEAKKRI). The region spanning 622–690 (GQVYDGTVLK…DKGRVRLSAK (69 aa)) is the S1 motif domain.

It belongs to the polyribonucleotide nucleotidyltransferase family. Mg(2+) serves as cofactor.

It is found in the cytoplasm. The enzyme catalyses RNA(n+1) + phosphate = RNA(n) + a ribonucleoside 5'-diphosphate. Involved in mRNA degradation. Catalyzes the phosphorolysis of single-stranded polyribonucleotides processively in the 3'- to 5'-direction. This chain is Polyribonucleotide nucleotidyltransferase, found in Methylobacillus flagellatus (strain ATCC 51484 / DSM 6875 / VKM B-1610 / KT).